The chain runs to 390 residues: Succinate--CoA ligase [ADP-forming] subunit beta (390 aa).

Residues 9–245 (KHLLKKYNIP…TTQEDEHETM (237 aa)) form the ATP-grasp domain. Residues Lys-46, 53-55 (GRG), Glu-99, Ser-102, and Glu-107 each bind ATP. Mg(2+) contacts are provided by Asn-200 and Asp-214. Substrate-binding positions include Asn-265 and 322-324 (GIV).

The protein belongs to the succinate/malate CoA ligase beta subunit family. As to quaternary structure, heterotetramer of two alpha and two beta subunits. Mg(2+) is required as a cofactor.

It carries out the reaction succinate + ATP + CoA = succinyl-CoA + ADP + phosphate. The enzyme catalyses GTP + succinate + CoA = succinyl-CoA + GDP + phosphate. Its pathway is carbohydrate metabolism; tricarboxylic acid cycle; succinate from succinyl-CoA (ligase route): step 1/1. Functionally, succinyl-CoA synthetase functions in the citric acid cycle (TCA), coupling the hydrolysis of succinyl-CoA to the synthesis of either ATP or GTP and thus represents the only step of substrate-level phosphorylation in the TCA. The beta subunit provides nucleotide specificity of the enzyme and binds the substrate succinate, while the binding sites for coenzyme A and phosphate are found in the alpha subunit. This Coxiella burnetii (strain CbuG_Q212) (Coxiella burnetii (strain Q212)) protein is Succinate--CoA ligase [ADP-forming] subunit beta.